Consider the following 93-residue polypeptide: MLNVNEYFEGQVKSIGFEAQGDRTSVGVMAAGEYTFGTAAPERMTVVKGSMDVKRPGHVEWETFNAGDDFEVPGDSSFEVKITSSTAYLCDYL.

This sequence belongs to the nucleoside phosphorylase PpnP family.

The catalysed reaction is a purine D-ribonucleoside + phosphate = a purine nucleobase + alpha-D-ribose 1-phosphate. The enzyme catalyses adenosine + phosphate = alpha-D-ribose 1-phosphate + adenine. It catalyses the reaction cytidine + phosphate = cytosine + alpha-D-ribose 1-phosphate. It carries out the reaction guanosine + phosphate = alpha-D-ribose 1-phosphate + guanine. The catalysed reaction is inosine + phosphate = alpha-D-ribose 1-phosphate + hypoxanthine. The enzyme catalyses thymidine + phosphate = 2-deoxy-alpha-D-ribose 1-phosphate + thymine. It catalyses the reaction uridine + phosphate = alpha-D-ribose 1-phosphate + uracil. It carries out the reaction xanthosine + phosphate = alpha-D-ribose 1-phosphate + xanthine. Catalyzes the phosphorolysis of diverse nucleosides, yielding D-ribose 1-phosphate and the respective free bases. Can use uridine, adenosine, guanosine, cytidine, thymidine, inosine and xanthosine as substrates. Also catalyzes the reverse reactions. This Photobacterium profundum (strain SS9) protein is Pyrimidine/purine nucleoside phosphorylase.